Reading from the N-terminus, the 267-residue chain is 4-hydroxy-tetrahydrodipicolinate reductase (267 aa).

Residues Gly9–Met14 and Asp35 each bind NAD(+). Arg36 is an NADP(+) binding site. Residues Gly98 to Thr100 and Ala122 to Met125 each bind NAD(+). Catalysis depends on His155, which acts as the Proton donor/acceptor. His156 provides a ligand contact to (S)-2,3,4,5-tetrahydrodipicolinate. The active-site Proton donor is Lys159. Position 165 to 166 (Gly165 to Thr166) interacts with (S)-2,3,4,5-tetrahydrodipicolinate.

It belongs to the DapB family.

The protein localises to the cytoplasm. It catalyses the reaction (S)-2,3,4,5-tetrahydrodipicolinate + NAD(+) + H2O = (2S,4S)-4-hydroxy-2,3,4,5-tetrahydrodipicolinate + NADH + H(+). It carries out the reaction (S)-2,3,4,5-tetrahydrodipicolinate + NADP(+) + H2O = (2S,4S)-4-hydroxy-2,3,4,5-tetrahydrodipicolinate + NADPH + H(+). It participates in amino-acid biosynthesis; L-lysine biosynthesis via DAP pathway; (S)-tetrahydrodipicolinate from L-aspartate: step 4/4. In terms of biological role, catalyzes the conversion of 4-hydroxy-tetrahydrodipicolinate (HTPA) to tetrahydrodipicolinate. The polypeptide is 4-hydroxy-tetrahydrodipicolinate reductase (Thiobacillus denitrificans (strain ATCC 25259 / T1)).